Here is a 257-residue protein sequence, read N- to C-terminus: Coenzyme F420:L-glutamate ligase (257 aa).

GTP contacts are provided by residues 9–12 (VPEV), 38–39 (ST), and K43. D113 is a binding site for a divalent metal cation. N116 is a GTP binding site. D154, T155, and E212 together coordinate a divalent metal cation. 210–217 (TGEGDGGT) contacts GTP.

The protein belongs to the CofE family. Homodimer. Mg(2+) serves as cofactor. The cofactor is Mn(2+). It depends on K(+) as a cofactor.

The enzyme catalyses oxidized coenzyme F420-0 + GTP + L-glutamate = oxidized coenzyme F420-1 + GDP + phosphate + H(+). It carries out the reaction oxidized coenzyme F420-1 + GTP + L-glutamate = oxidized coenzyme F420-2 + GDP + phosphate + H(+). Its pathway is cofactor biosynthesis; coenzyme F420 biosynthesis. In terms of biological role, catalyzes the GTP-dependent successive addition of two or more gamma-linked L-glutamates to the L-lactyl phosphodiester of 7,8-didemethyl-8-hydroxy-5-deazariboflavin (F420-0) to form coenzyme F420-0-glutamyl-glutamate (F420-2) or polyglutamated F420 derivatives. The protein is Coenzyme F420:L-glutamate ligase of Haloarcula marismortui (strain ATCC 43049 / DSM 3752 / JCM 8966 / VKM B-1809) (Halobacterium marismortui).